A 224-amino-acid chain; its full sequence is Cutinase 1 (224 aa).

The first 16 residues, 1–16 (MKFLSVLSLAITLAAA), serve as a signal peptide directing secretion. Cysteine 46 and cysteine 125 form a disulfide bridge. The Nucleophile role is filled by serine 136. Cysteines 187 and 194 form a disulfide. Residue aspartate 191 is part of the active site. Histidine 204 acts as the Proton donor/acceptor in catalysis.

This sequence belongs to the cutinase family. Post-translationally, the 2 disulfide bonds play a critical role in holding the catalytic residues in juxta-position; reduction of the disulfide bridges results in the complete inactivation of the enzyme. In terms of processing, the N-terminus is blocked.

The protein localises to the secreted. The catalysed reaction is cutin + H2O = cutin monomers.. Inhibited by diisopropyl fluorophosphate (DFP). Catalyzes the hydrolysis of complex carboxylic polyesters found in the cell wall of plants. Degrades cutin, a macromolecule that forms the structure of the plant cuticle. Allows pathogenic fungi to penetrate through the cuticular barrier into the host plant during the initial stage of fungal infection. This Colletotrichum gloeosporioides (Anthracnose fungus) protein is Cutinase 1 (CUTA).